Reading from the N-terminus, the 428-residue chain is Glutamate-1-semialdehyde 2,1-aminomutase (428 aa).

K265 bears the N6-(pyridoxal phosphate)lysine mark.

This sequence belongs to the class-III pyridoxal-phosphate-dependent aminotransferase family. HemL subfamily. Homodimer. Pyridoxal 5'-phosphate is required as a cofactor.

The protein localises to the cytoplasm. The catalysed reaction is (S)-4-amino-5-oxopentanoate = 5-aminolevulinate. It functions in the pathway porphyrin-containing compound metabolism; protoporphyrin-IX biosynthesis; 5-aminolevulinate from L-glutamyl-tRNA(Glu): step 2/2. The sequence is that of Glutamate-1-semialdehyde 2,1-aminomutase from Vesicomyosocius okutanii subsp. Calyptogena okutanii (strain HA).